The sequence spans 163 residues: Transcription antitermination protein NusB (163 aa).

This sequence belongs to the NusB family.

In terms of biological role, involved in transcription antitermination. Required for transcription of ribosomal RNA (rRNA) genes. Binds specifically to the boxA antiterminator sequence of the ribosomal RNA (rrn) operons. The sequence is that of Transcription antitermination protein NusB from Mycolicibacterium vanbaalenii (strain DSM 7251 / JCM 13017 / BCRC 16820 / KCTC 9966 / NRRL B-24157 / PYR-1) (Mycobacterium vanbaalenii).